Here is a 214-residue protein sequence, read N- to C-terminus: Charged multivesicular body protein 2b (214 aa).

A coiled-coil region spans residues 25–55 (QRQIARDRTALEKQEKQLEMEIKKMAKTGNR). Residues 178-199 (MAHAPSAARKTPSAATAKADGI) form a disordered region. Positions 202–212 (EDIERQLKALG) match the MIT-interacting motif motif.

It belongs to the SNF7 family. Probable core component of the endosomal sorting required for transport complex III (ESCRT-III). ESCRT-III components are thought to multimerize to form a flat lattice on the perimeter membrane of the endosome.

Its subcellular location is the cytoplasm. It is found in the cytosol. It localises to the late endosome membrane. In terms of biological role, probable core component of the endosomal sorting required for transport complex III (ESCRT-III) which is involved in multivesicular bodies (MVBs) formation and sorting of endosomal cargo proteins into MVBs. MVBs contain intraluminal vesicles (ILVs) that are generated by invagination and scission from the limiting membrane of the endosome and mostly are delivered to lysosomes enabling degradation of membrane proteins, such as stimulated growth factor receptors, lysosomal enzymes and lipids. This is Charged multivesicular body protein 2b (chmp2b) from Danio rerio (Zebrafish).